Here is a 160-residue protein sequence, read N- to C-terminus: Cytochrome c-type biogenesis protein CcmE (160 aa).

Topologically, residues 1–7 are cytoplasmic; it reads MTRKQRR. A helical; Signal-anchor for type II membrane protein transmembrane segment spans residues 8-28; sequence LFMIFGALGTLGVAVGLILFA. Topologically, residues 29 to 160 are periplasmic; the sequence is LSDNIVFFYG…TQGAAAPLIR (132 aa). Heme-binding residues include His-122 and Tyr-126. Residues 140 to 160 form a disordered region; the sequence is VWQEDGQAKPATQGAAAPLIR.

It belongs to the CcmE/CycJ family.

The protein resides in the cell inner membrane. In terms of biological role, heme chaperone required for the biogenesis of c-type cytochromes. Transiently binds heme delivered by CcmC and transfers the heme to apo-cytochromes in a process facilitated by CcmF and CcmH. The chain is Cytochrome c-type biogenesis protein CcmE from Beijerinckia indica subsp. indica (strain ATCC 9039 / DSM 1715 / NCIMB 8712).